Reading from the N-terminus, the 305-residue chain is Putative S-adenosyl-L-methionine-dependent methyltransferase Mvan_1344 (305 aa).

S-adenosyl-L-methionine contacts are provided by residues Asp-130 and 159–160; that span reads DL.

Belongs to the UPF0677 family.

Its function is as follows. Exhibits S-adenosyl-L-methionine-dependent methyltransferase activity. The chain is Putative S-adenosyl-L-methionine-dependent methyltransferase Mvan_1344 from Mycolicibacterium vanbaalenii (strain DSM 7251 / JCM 13017 / BCRC 16820 / KCTC 9966 / NRRL B-24157 / PYR-1) (Mycobacterium vanbaalenii).